The primary structure comprises 346 residues: 3-isopropylmalate dehydrogenase (346 aa).

76–87 (GPQWTDPNNRPE) provides a ligand contact to NAD(+). Residues R94, R104, R132, and D217 each contribute to the substrate site. Residues D217, D241, and D245 each contribute to the Mg(2+) site. 275 to 287 (GSAPDIANQNLAN) provides a ligand contact to NAD(+).

It belongs to the isocitrate and isopropylmalate dehydrogenases family. LeuB type 1 subfamily. As to quaternary structure, homodimer. It depends on Mg(2+) as a cofactor. Requires Mn(2+) as cofactor.

Its subcellular location is the cytoplasm. The catalysed reaction is (2R,3S)-3-isopropylmalate + NAD(+) = 4-methyl-2-oxopentanoate + CO2 + NADH. The protein operates within amino-acid biosynthesis; L-leucine biosynthesis; L-leucine from 3-methyl-2-oxobutanoate: step 3/4. In terms of biological role, catalyzes the oxidation of 3-carboxy-2-hydroxy-4-methylpentanoate (3-isopropylmalate) to 3-carboxy-4-methyl-2-oxopentanoate. The product decarboxylates to 4-methyl-2 oxopentanoate. This is 3-isopropylmalate dehydrogenase from Staphylococcus haemolyticus (strain JCSC1435).